We begin with the raw amino-acid sequence, 238 residues long: Snake venom metalloproteinase HF-1 (238 aa).

The region spanning 17–221 (RYIQLVVVAD…YNPQCILNKP (205 aa)) is the Peptidase M12B domain. Ca(2+) is bound at residue D106. 2 disulfides stabilise this stretch: C130/C216 and C174/C181. H158 is a binding site for Zn(2+). E159 is a catalytic residue. H162 and H168 together coordinate Zn(2+). 2 residues coordinate Ca(2+): C216 and N219.

Monomer. Zn(2+) is required as a cofactor. Expressed by the venom gland.

The protein resides in the secreted. With respect to regulation, inhibited by EDTA and EGTA. Inhibited by serum and antihemorrhagic factors Da2-I and Da2-II from D.albiventris. Not inhibited by PMSF or SBT-I. Its function is as follows. Snake venom zinc metalloprotease that is weakly hemorrhagic and has Aalpha, Bbeta fibrinogenolytic activities. Cleaves the Aalpha chain of fibrinogen first, followed by the Bbeta chain and shows no effect on the gamma chain. Has caseinolytic activity. Induces dose-dependent edema. This Bothrops marajoensis (Marajo lancehead) protein is Snake venom metalloproteinase HF-1.